The following is a 514-amino-acid chain: Polygalacturonase (514 aa).

Residues 1-22 (MAMKFIAPMAFVAMQLIIMAAA) form the signal peptide. Positions 23-45 (EDQSAQIMLDSDIEQYLRSNRSL) are excised as a propeptide. PbH1 repeat units follow at residues 214 to 240 (CEGVKIIGISITAPRDSPNTDGIDIFA), 241 to 262 (SKNFHLQKNTIGTGDDCVAIGT), 264 to 284 (SSNIVIEDLICGPGHGISIGS), 294 to 315 (VSYVHVNGAKFIDTQNGLRIKT), and 323 to 344 (ASHIIYENVEMINSENPILINQ). The Proton donor role is filled by aspartate 255. Residue histidine 278 is part of the active site. A propeptide spanning residues 434-514 (AKRKESKSHK…CSRHGKIYHP (81 aa)) is cleaved from the precursor. 2 N-linked (GlcNAc...) asparagine glycosylation sites follow: asparagine 460 and asparagine 472.

This sequence belongs to the glycosyl hydrolase 28 family.

It is found in the secreted. It localises to the plastid. The protein resides in the amyloplast. Its subcellular location is the cell wall. It catalyses the reaction (1,4-alpha-D-galacturonosyl)n+m + H2O = (1,4-alpha-D-galacturonosyl)n + (1,4-alpha-D-galacturonosyl)m.. This chain is Polygalacturonase, found in Cryptomeria japonica (Japanese cedar).